A 387-amino-acid chain; its full sequence is uncharacterized protein (387 aa).

The signal sequence occupies residues 1–27; that stretch reads MKKWMITIAMLILAGIALFVFISPLKS.

This is an uncharacterized protein from Bacillus subtilis (strain 168).